We begin with the raw amino-acid sequence, 424 residues long: Enolase (424 aa).

Gln163 provides a ligand contact to (2R)-2-phosphoglycerate. Catalysis depends on Glu204, which acts as the Proton donor. Positions 241, 284, and 311 each coordinate Mg(2+). Residues Lys336, Arg365, Ser366, and Lys387 each contribute to the (2R)-2-phosphoglycerate site. Catalysis depends on Lys336, which acts as the Proton acceptor.

Belongs to the enolase family. Requires Mg(2+) as cofactor.

It is found in the cytoplasm. The protein resides in the secreted. Its subcellular location is the cell surface. It catalyses the reaction (2R)-2-phosphoglycerate = phosphoenolpyruvate + H2O. It participates in carbohydrate degradation; glycolysis; pyruvate from D-glyceraldehyde 3-phosphate: step 4/5. Functionally, catalyzes the reversible conversion of 2-phosphoglycerate (2-PG) into phosphoenolpyruvate (PEP). It is essential for the degradation of carbohydrates via glycolysis. The chain is Enolase from Dictyoglomus thermophilum (strain ATCC 35947 / DSM 3960 / H-6-12).